Here is a 373-residue protein sequence, read N- to C-terminus: MAGLSLEFTVNTWNLRSLSQVPCPLRHGFRFPRRLTRRRTILMCSDSSSQSWNVPVLSSYEVGERLKLARGGQQFLAMYSSVVDGITTDPAAMVLPLDDHMVHRGHGVFDTALIINGYLYELDQHLDRILRSASMAKIPLPFDRETIKRILIQTVSVSGCRDGSLRYWLSAGPGDFLLSPSQCLKPTLYAIVIKTNFAINPIGVKVVTSSIPIKPPEFATVKSVNYLPNVLSQMEAEAKGAYAGIWVCKDGFIAEGPNMNVAFVVNGGKELVMPRFDNVLSGCTAKRTLTLAEQLVSKGILKTVKVMDVTVEDGKKADEMMLIGSGIPIRPVIQWDEEFIGEGKEGPIAKALLDLLLEDMRSGPPSVRVLVPY.

A chloroplast-targeting transit peptide spans 1 to 57 (MAGLSLEFTVNTWNLRSLSQVPCPLRHGFRFPRRLTRRRTILMCSDSSSQSWNVPVL). Pyridoxal 5'-phosphate is bound at residue Arg-128. The active-site Proton acceptor is Lys-222. An N6-(pyridoxal phosphate)lysine modification is found at Lys-222. Glu-255 contacts pyridoxal 5'-phosphate.

It belongs to the class-IV pyridoxal-phosphate-dependent aminotransferase family. Homodimer. The cofactor is pyridoxal 5'-phosphate.

The protein localises to the plastid. It localises to the chloroplast. The enzyme catalyses D-alanine + 2-oxoglutarate = D-glutamate + pyruvate. The catalysed reaction is 4-amino-4-deoxychorismate = 4-aminobenzoate + pyruvate + H(+). Its pathway is cofactor biosynthesis; tetrahydrofolate biosynthesis; 4-aminobenzoate from chorismate: step 2/2. With respect to regulation, inhibited by hydroxylamine or amino-oxyacetic acid. Its function is as follows. Amino acid aminotransferase showing activity for D-Asp and D-Ala as amino donors with 2-oxoglutarate as an amino acceptor. Can also use D-Met, D-Tyr, D-Phe, D-Gln, D-Trp and D-Asn as substrates, but no activity with L-Asp, L-Ala, L-Leu, L-Ile or L-Val. Also catalyzes the reverse reaction where an amino group is transferred from D-Glu to pyruvate or oxaloacetate to produce D-Ala or D-Asp, respectively. Also involved in folate biosynthesis, acting as an aminodeoxychorismate lyase converting 4-amino-4-deoxychorismate (ADC) to p-aminobenzoate (PABA). In Arabidopsis thaliana (Mouse-ear cress), this protein is D-amino-acid transaminase, chloroplastic.